Here is a 206-residue protein sequence, read N- to C-terminus: MNNLLLINASPRGQGSHGNQLALELVSSLRQRYPHLELVERDLGANPLPPLGMDYAHALTTPTPFDAPLFEVSEGLIGELERSDALLIATPMHNFTLPAALKLWIDYVLRIHRTFSSGPEGKVGLLKDRPVHVLVSSGGFHQGERARQPDFLTPYLRQVLNTLGLFDLQFTYLQGLVFGDEAVRATLDEARSALSLQPLFNPLVCA.

FMN is bound by residues serine 10 and 136–139 (SSGG).

It belongs to the azoreductase type 1 family. In terms of assembly, homodimer. It depends on FMN as a cofactor.

The enzyme catalyses 2 a quinone + NADH + H(+) = 2 a 1,4-benzosemiquinone + NAD(+). It carries out the reaction N,N-dimethyl-1,4-phenylenediamine + anthranilate + 2 NAD(+) = 2-(4-dimethylaminophenyl)diazenylbenzoate + 2 NADH + 2 H(+). Its function is as follows. Quinone reductase that provides resistance to thiol-specific stress caused by electrophilic quinones. In terms of biological role, also exhibits azoreductase activity. Catalyzes the reductive cleavage of the azo bond in aromatic azo compounds to the corresponding amines. This chain is FMN-dependent NADH:quinone oxidoreductase 4, found in Pseudomonas fluorescens (strain ATCC BAA-477 / NRRL B-23932 / Pf-5).